A 419-amino-acid polypeptide reads, in one-letter code: Tyrosine--tRNA ligase (419 aa).

Residue Y34 participates in L-tyrosine binding. Residues 39-48 carry the 'HIGH' region motif; that stretch reads PSGDSMHIGH. 2 residues coordinate L-tyrosine: Y168 and Q172. The 'KMSKS' region signature appears at 230 to 234; sequence KFGKS. Position 233 (K233) interacts with ATP. An S4 RNA-binding domain is found at 352-418; it reads ANLVDWLVTL…GKKKYFLVSY (67 aa).

The protein belongs to the class-I aminoacyl-tRNA synthetase family. TyrS type 1 subfamily. As to quaternary structure, homodimer.

Its subcellular location is the cytoplasm. The catalysed reaction is tRNA(Tyr) + L-tyrosine + ATP = L-tyrosyl-tRNA(Tyr) + AMP + diphosphate + H(+). Catalyzes the attachment of tyrosine to tRNA(Tyr) in a two-step reaction: tyrosine is first activated by ATP to form Tyr-AMP and then transferred to the acceptor end of tRNA(Tyr). The protein is Tyrosine--tRNA ligase of Listeria monocytogenes serotype 4b (strain CLIP80459).